The primary structure comprises 273 residues: MTELYAVIGHPIDHSQSPFIHQEFARQTGLGLDYERLLSPLDGFEATVRQFIGRGGKGLNVTLPFKLEACQLSGALTERARAADAVNTLTFRDGQIQGDNTDGVGLVRDIVDNLDVRIQGKRLLLLGAGGAVRGVLQPLLAQHPASLTVANRTVTKAEALVTHFAQWGEVDAAGYDDLAGQQFDIVINGTSTGLSGNDLPLPAGLLAGSELVYDMVYGKGLTPFLARGQAERAGMLSDGLGMLVEQAAESWHIWHGGRPNTRPVMNSLRERLA.

Shikimate is bound by residues 15–17 (SQS) and Thr62. Residue Lys66 is the Proton acceptor of the active site. Position 78 (Glu78) interacts with NADP(+). 2 residues coordinate shikimate: Asn87 and Asp102. Residues 127–131 (GAGGA), 151–156 (NRTVTK), and Met215 contribute to the NADP(+) site. Tyr217 serves as a coordination point for shikimate. Gly239 provides a ligand contact to NADP(+).

The protein belongs to the shikimate dehydrogenase family. As to quaternary structure, homodimer.

The catalysed reaction is shikimate + NADP(+) = 3-dehydroshikimate + NADPH + H(+). The protein operates within metabolic intermediate biosynthesis; chorismate biosynthesis; chorismate from D-erythrose 4-phosphate and phosphoenolpyruvate: step 4/7. Its function is as follows. Involved in the biosynthesis of the chorismate, which leads to the biosynthesis of aromatic amino acids. Catalyzes the reversible NADPH linked reduction of 3-dehydroshikimate (DHSA) to yield shikimate (SA). The chain is Shikimate dehydrogenase (NADP(+)) from Laribacter hongkongensis (strain HLHK9).